The primary structure comprises 396 residues: 8-amino-7-oxononanoate synthase (396 aa).

Arginine 19 lines the substrate pocket. Position 106–107 (106–107 (GY)) interacts with pyridoxal 5'-phosphate. Residue histidine 131 coordinates substrate. Positions 176, 204, and 233 each coordinate pyridoxal 5'-phosphate. An N6-(pyridoxal phosphate)lysine modification is found at lysine 236. Residue threonine 350 coordinates substrate.

The protein belongs to the class-II pyridoxal-phosphate-dependent aminotransferase family. BioF subfamily. As to quaternary structure, homodimer. Requires pyridoxal 5'-phosphate as cofactor.

It carries out the reaction 6-carboxyhexanoyl-[ACP] + L-alanine + H(+) = (8S)-8-amino-7-oxononanoate + holo-[ACP] + CO2. It participates in cofactor biosynthesis; biotin biosynthesis. Its function is as follows. Catalyzes the decarboxylative condensation of pimeloyl-[acyl-carrier protein] and L-alanine to produce 8-amino-7-oxononanoate (AON), [acyl-carrier protein], and carbon dioxide. The protein is 8-amino-7-oxononanoate synthase of Pseudomonas savastanoi pv. phaseolicola (strain 1448A / Race 6) (Pseudomonas syringae pv. phaseolicola (strain 1448A / Race 6)).